Consider the following 635-residue polypeptide: Threonine--tRNA ligase (635 aa).

In terms of domain architecture, TGS spans 1 to 61 (MIKITLKDGS…KEDAALELLT (61 aa)). The interval 242–532 (DHRKLGQELD…LTEHFAGAFP (291 aa)) is catalytic. 3 residues coordinate Zn(2+): cysteine 333, histidine 384, and histidine 509.

This sequence belongs to the class-II aminoacyl-tRNA synthetase family. Homodimer. Zn(2+) is required as a cofactor.

The protein localises to the cytoplasm. The enzyme catalyses tRNA(Thr) + L-threonine + ATP = L-threonyl-tRNA(Thr) + AMP + diphosphate + H(+). Its function is as follows. Catalyzes the attachment of threonine to tRNA(Thr) in a two-step reaction: L-threonine is first activated by ATP to form Thr-AMP and then transferred to the acceptor end of tRNA(Thr). Also edits incorrectly charged L-seryl-tRNA(Thr). In Desulforamulus reducens (strain ATCC BAA-1160 / DSM 100696 / MI-1) (Desulfotomaculum reducens), this protein is Threonine--tRNA ligase.